A 314-amino-acid chain; its full sequence is Fructose-1,6-bisphosphatase class 1 (314 aa).

Mg(2+) contacts are provided by Glu-91, Asp-112, Leu-114, and Asp-115. Residues 115 to 118 (DGSS), Tyr-223, and Lys-254 contribute to the substrate site. Mg(2+) is bound at residue Glu-260.

This sequence belongs to the FBPase class 1 family. In terms of assembly, homotetramer. Mg(2+) serves as cofactor.

It is found in the cytoplasm. The catalysed reaction is beta-D-fructose 1,6-bisphosphate + H2O = beta-D-fructose 6-phosphate + phosphate. It participates in carbohydrate biosynthesis; gluconeogenesis. The chain is Fructose-1,6-bisphosphatase class 1 from Geobacter metallireducens (strain ATCC 53774 / DSM 7210 / GS-15).